Consider the following 678-residue polypeptide: Secretin ExeD (678 aa).

The N-terminal stretch at M1–A25 is a signal peptide. The interval T26–G122 is N0. An N1 region spans residues E124–G188. An N2 region spans residues D189–Q264. Positions G267 to D348 are N3. Residues Q353–D602 form a secretin region. The segment at N604–K678 is s domain.

Belongs to the bacterial secretin family. GSP D subfamily. In terms of assembly, forms a cylindrical channel with 15 subunits.

The protein localises to the cell outer membrane. Involved in a type II secretion system (T2SS, formerly general secretion pathway, GSP) for the export of proteins. This subunit forms the outer membrane channel. This is Secretin ExeD (exeD) from Aeromonas hydrophila.